The following is a 272-amino-acid chain: Prohibitin 1 (272 aa).

Ala-2 is subject to N-acetylalanine. Phosphothreonine is present on Thr-91. Residues Lys-128 and Lys-186 each carry the N6-acetyllysine modification. Residues 177–211 are a coiled coil; it reads KEFTEAVEAKQVAQQEAERARFVVEKAEQQKKAAI. Position 202 is an N6-acetyllysine; alternate (Lys-202). Lys-202 is modified (N6-succinyllysine; alternate). Phosphotyrosine is present on Tyr-249.

It belongs to the prohibitin family. Interacts with PHB2. Interacts with STOML2. Interacts with CD86 (via cytoplasmic domain); the interactions increases after priming with CD40. As to quaternary structure, (Microbial infection) Interacts with human enterovirus 71/EV-71 capsid protein VP0, protein 3CD and protease 3C. Widely expressed in different tissues.

The protein resides in the mitochondrion inner membrane. The protein localises to the nucleus. Its subcellular location is the cell membrane. It localises to the cytoplasm. Target of the anti-cancer drug Rocaglamide (Roc-A). Functionally, protein with pleiotropic attributes mediated in a cell-compartment- and tissue-specific manner, which include the plasma membrane-associated cell signaling functions, mitochondrial chaperone, and transcriptional co-regulator of transcription factors in the nucleus. Plays a role in adipose tissue and glucose homeostasis in a sex-specific manner. Contributes to pulmonary vascular remodeling by accelerating proliferation of pulmonary arterial smooth muscle cells. In the mitochondria, together with PHB2, forms large ring complexes (prohibitin complexes) in the inner mitochondrial membrane (IMM) and functions as a chaperone protein that stabilizes mitochondrial respiratory enzymes and maintains mitochondrial integrity in the IMM, which is required for mitochondrial morphogenesis, neuronal survival, and normal lifespan. The prohibitin complex, with DNAJC19, regulates cardiolipin remodeling and the protein turnover of OMA1 in a cardiolipin-binding manner. Regulates mitochondrial respiration activity playing a role in cellular aging. The prohibitin complex plays a role of mitophagy receptor involved in targeting mitochondria for autophagic degradation. Involved in mitochondrial-mediated antiviral innate immunity, activates RIG-I-mediated signal transduction and production of IFNB1 and pro-inflammatory cytokine IL6. Its function is as follows. In the nucleus, acts as a transcription coregulator, enhances promoter binding by TP53, a transcription factor it activates, but reduces the promoter binding by E2F1, a transcription factor it represses. Interacts with STAT3 to affect IL17 secretion in T-helper Th17 cells. In terms of biological role, in the plasma membrane, cooperates with CD86 to mediate CD86-signaling in B lymphocytes that regulates the level of IgG1 produced through the activation of distal signaling intermediates. Upon CD40 engagement, required to activate NF-kappa-B signaling pathway via phospholipase C and protein kinase C activation. Functionally, (Microbial infection) In neuronal cells, cell surface-expressed PHB1 is involved in human enterovirus 71/EV-71 entry into neuronal cells specifically, while membrane-bound mitochondrial PHB1 associates with the virus replication complex and facilitates viral replication. May serve as a receptor for EV71. The protein is Prohibitin 1 (Phb1) of Mus musculus (Mouse).